The following is a 397-amino-acid chain: MSNSLVLVINSGSSSLKFALIDTVSGEATLNGIGECFGLADANVSWKIDGKKHEFQLSDNGNHHKQAIDRIVALLEEQGIKQDIVAVGHRVVHGGEKFTQTVKIDETVLQEIENLSDLAPLHNPAHVVGMRAAIAAFPALSQYAVFDTAFHQTMPAKAFTGAISSKLYDDYGIRRYGFHGTSHYFVSREAAKVINKPIEKSSFISVHLGNGASVCAIKDGQSVDTSMGFTPLSGLMMGTRCGDLDPGIIEFLLKKGWSTEQVFKELNSNSGFLGVSGLTSDCRGVIEAMEEGHAGATLAFEIFTYRVAKYIASYMVALDELDGIIFTGGIGENSLPIRRQILKSLKIFGYREDEVANADARFGKGGVITQANTPIAMVIPTNEEWVIAKESMALLHA.

Asparagine 10 contacts Mg(2+). Lysine 17 contributes to the ATP binding site. Arginine 90 serves as a coordination point for substrate. The active-site Proton donor/acceptor is aspartate 147. ATP contacts are provided by residues 207 to 211 (HLGNG), 281 to 283 (DCR), and 329 to 333 (GIGEN). Position 383 (glutamate 383) interacts with Mg(2+).

This sequence belongs to the acetokinase family. As to quaternary structure, homodimer. The cofactor is Mg(2+). Mn(2+) is required as a cofactor.

The protein resides in the cytoplasm. The enzyme catalyses acetate + ATP = acetyl phosphate + ADP. The protein operates within metabolic intermediate biosynthesis; acetyl-CoA biosynthesis; acetyl-CoA from acetate: step 1/2. In terms of biological role, catalyzes the formation of acetyl phosphate from acetate and ATP. Can also catalyze the reverse reaction. The polypeptide is Acetate kinase 2 (Photobacterium profundum (strain SS9)).